We begin with the raw amino-acid sequence, 484 residues long: Protein nucleotidyltransferase YdiU (484 aa).

Positions 87, 89, 90, 110, 122, 123, 173, and 180 each coordinate ATP. The active-site Proton acceptor is the Asp249. Positions 250 and 259 each coordinate Mg(2+). Asp259 lines the ATP pocket. The interval 463-484 (EQEKYAELPPPSDRPYRTFCGT) is disordered.

The protein belongs to the SELO family. Mg(2+) serves as cofactor. Requires Mn(2+) as cofactor.

It catalyses the reaction L-seryl-[protein] + ATP = 3-O-(5'-adenylyl)-L-seryl-[protein] + diphosphate. It carries out the reaction L-threonyl-[protein] + ATP = 3-O-(5'-adenylyl)-L-threonyl-[protein] + diphosphate. The enzyme catalyses L-tyrosyl-[protein] + ATP = O-(5'-adenylyl)-L-tyrosyl-[protein] + diphosphate. The catalysed reaction is L-histidyl-[protein] + UTP = N(tele)-(5'-uridylyl)-L-histidyl-[protein] + diphosphate. It catalyses the reaction L-seryl-[protein] + UTP = O-(5'-uridylyl)-L-seryl-[protein] + diphosphate. It carries out the reaction L-tyrosyl-[protein] + UTP = O-(5'-uridylyl)-L-tyrosyl-[protein] + diphosphate. In terms of biological role, nucleotidyltransferase involved in the post-translational modification of proteins. It can catalyze the addition of adenosine monophosphate (AMP) or uridine monophosphate (UMP) to a protein, resulting in modifications known as AMPylation and UMPylation. The polypeptide is Protein nucleotidyltransferase YdiU (Geobacillus kaustophilus (strain HTA426)).